The primary structure comprises 680 residues: Probable galacturonosyltransferase 3 (680 aa).

Topologically, residues 1–6 (MTTFST) are cytoplasmic. Residues 7–27 (CAAFLSLVVVLHAVHVGGAIL) form a helical; Signal-anchor for type II membrane protein membrane-spanning segment. Residues 28 to 680 (ESQAPHRELK…PYLRRCDINE (653 aa)) lie on the Lumenal side of the membrane. The disordered stretch occupies residues 118-146 (SFQNDTGMEDNASHSTTNQTDESENQFPN). N-linked (GlcNAc...) asparagine glycosylation is found at Asn-121, Asn-128, Asn-135, Asn-239, Asn-386, Asn-438, Asn-545, Asn-578, Asn-610, and Asn-631. A compositionally biased stretch (polar residues) spans 130-145 (SHSTTNQTDESENQFP).

It belongs to the glycosyltransferase 8 family. As to expression, expressed in roots, inflorescences, siliques, leaves and stems.

The protein resides in the golgi apparatus membrane. It participates in glycan metabolism; pectin biosynthesis. May be involved in pectin and/or xylans biosynthesis in cell walls. The polypeptide is Probable galacturonosyltransferase 3 (GAUT3) (Arabidopsis thaliana (Mouse-ear cress)).